A 355-amino-acid polypeptide reads, in one-letter code: Uroporphyrinogen decarboxylase (355 aa).

Substrate-binding positions include arginine 27 to arginine 31, aspartate 77, tyrosine 154, threonine 209, and histidine 328.

Belongs to the uroporphyrinogen decarboxylase family. In terms of assembly, homodimer.

The protein resides in the cytoplasm. It carries out the reaction uroporphyrinogen III + 4 H(+) = coproporphyrinogen III + 4 CO2. The protein operates within porphyrin-containing compound metabolism; protoporphyrin-IX biosynthesis; coproporphyrinogen-III from 5-aminolevulinate: step 4/4. In terms of biological role, catalyzes the decarboxylation of four acetate groups of uroporphyrinogen-III to yield coproporphyrinogen-III. This Aliivibrio salmonicida (strain LFI1238) (Vibrio salmonicida (strain LFI1238)) protein is Uroporphyrinogen decarboxylase.